Reading from the N-terminus, the 589-residue chain is TAF5-like RNA polymerase II p300/CBP-associated factor-associated factor 65 kDa subunit 5L (589 aa).

WD repeat units lie at residues 266–305 (NTEQ…LKSE), 340–379 (GHCG…NTVL), 382–421 (GHAY…PLRI), 424–463 (GHLA…SVRL), 466–505 (GHRG…LFKE), and 508–547 (GHTD…CNTP).

Belongs to the WD repeat TAF5 family. In terms of assembly, the PCAF complex is composed of a number of TBP-associated factors (TAFS), such as TAF5, TAF5L, TAF6, TAF6L, TAF9, TAF10 and TAF12, PCAF, and also PCAF-associated factors (PAFs), such as TADA2L/ADA2, TADA3L/ADA3 and SPT3. Component of the STAGA transcription coactivator-HAT complex, at least composed of SUPT3H, GCN5L2, TAF5L, TAF6L, SUPT7L, TADA3L, TAD1L, TAF10, TAF12, TRRAP and TAF9.

It is found in the nucleus. In terms of biological role, functions as a component of the PCAF complex. The PCAF complex is capable of efficiently acetylating histones in a nucleosomal context. The PCAF complex could be considered as the human version of the yeast SAGA complex. With TAF6L, acts as an epigenetic regulator essential for somatic reprogramming. Regulates target genes through H3K9ac deposition and MYC recruitment which trigger MYC regulatory network to orchestrate gene expression programs to control embryonic stem cell state. This is TAF5-like RNA polymerase II p300/CBP-associated factor-associated factor 65 kDa subunit 5L from Mus musculus (Mouse).